The sequence spans 452 residues: Scaffold protein ILK (452 aa).

ANK repeat units follow at residues 2-30 (DDIF…LNQG), 31-63 (DDHG…INVM), 64-96 (NRGD…INAV), 97-129 (NEHG…VSIA), and 130-174 (NKYS…GTTR). Residues 193 to 446 (LSLSQKLNEN…PKFDMIVPIL (254 aa)) enclose the Protein kinase domain. Residues N200, N202, S204, H270, M272, and N279 each contribute to the ATP site. Residue D339 coordinates Mg(2+). K341 lines the ATP pocket. The Nuclear localization signal motif lies at 363 to 371 (KKPEEINRR).

This sequence belongs to the protein kinase superfamily. TKL Ser/Thr protein kinase family. Interacts with PXN/PAXILLIN (via LD motif 4).

The protein localises to the cell junction. It localises to the focal adhesion. Its subcellular location is the cell membrane. The protein resides in the cell projection. It is found in the lamellipodium. The protein localises to the cytoplasm. It localises to the myofibril. Its subcellular location is the sarcomere. The protein resides in the nucleus. It is found in the cytoskeleton. The protein localises to the microtubule organizing center. It localises to the centrosome. Its subcellular location is the cell cortex. Functionally, scaffold protein which mediates protein-protein interactions during a range of cellular events including focal adhesion assembly, cell adhesion and cell migration. The sequence is that of Scaffold protein ILK from Gallus gallus (Chicken).